The chain runs to 93 residues: Small ribosomal subunit protein uS19 (93 aa).

This sequence belongs to the universal ribosomal protein uS19 family.

In terms of biological role, protein S19 forms a complex with S13 that binds strongly to the 16S ribosomal RNA. This Thermoanaerobacter pseudethanolicus (strain ATCC 33223 / 39E) (Clostridium thermohydrosulfuricum) protein is Small ribosomal subunit protein uS19.